The primary structure comprises 86 residues: Diphthamide biosynthesis protein 3 (86 aa).

The DPH-type MB domain maps to 4-60 (YHDEVEIEDFEYDEEEEMYYYPCPCGDRFQISKEELIEGEEVATCPSCSLVIKVIYD). 4 residues coordinate Fe cation: Cys-26, Cys-28, Cys-48, and Cys-51.

The protein belongs to the DPH3 family. In terms of assembly, component of the 2-(3-amino-3-carboxypropyl)histidine synthase complex composed of Dph1, Dph2, Dph3 and a NADH-dependent reductase. It depends on Fe(2+) as a cofactor.

It catalyses the reaction [3Fe-4S](1+)-[protein] + Fe(2+)-[Dph3] = [3Fe-4S](0)-[protein] + Fe(3+)-[Dph3]. The catalysed reaction is 2 [3Fe-4S](0)-[protein] + 2 Fe(2+)-[Dph3] + NADH = 2 [4Fe-4S](1+)-[protein] + 2 [Dph3] + NAD(+) + H(+). It participates in protein modification; peptidyl-diphthamide biosynthesis. Required for the first step of diphthamide biosynthesis, a post-translational modification of histidine which occurs in elongation factor 2. Dph1 and Dph2 transfer a 3-amino-3-carboxypropyl (ACP) group from S-adenosyl-L-methionine (SAM) to a histidine residue, the reaction is assisted by a reduction system comprising Dph3 and a NADH-dependent reductase. Acts as an electron donor to reduce the Fe-S cluster in Dph1-Dph2 keeping the [4Fe-4S] clusters in the active and reduced state. Restores iron to Dph1-Dph2 iron-sulfur clusters which have degraded from [4Fe-4S] to [3Fe-4S] by donating an iron atom to reform [4Fe-4S] clusters, in a manner dependent on the presence of elongation factor 2 and SAM. Associates with the elongator complex and is required for tRNA Wobble base modifications mediated by the elongator complex. The elongator complex is required for multiple tRNA modifications, including mcm5U (5-methoxycarbonylmethyl uridine), mcm5s 2U (5-methoxycarbonylmethyl-2-thiouridine), and ncm5U (5-carbamoylmethyl uridine). In Drosophila melanogaster (Fruit fly), this protein is Diphthamide biosynthesis protein 3.